Consider the following 420-residue polypeptide: MKKFAAVLGLTVAFAAASQAHAVTLTFACDSVGQGFDECKKGADAWAKKTGNTVKLVQVPKESDARLALYQQQLGAKASDVDVYMIDVVWPGLIGQHLMDLSKSIPAAEVKAHFPAIVQNNTVGGKLIAMPWFTDAGVLYYRTDLLKKYGYNAPPKTWNELATMAQKIQAGERKSNPKFVGYVFQGKNYEGLTCDALEWISSFGGGSIVDPSGKITVNNPKAVQALQAIQGLIGTAAPAAVTTYGEEEARNVWQAGNSAFMRNWPYAYAAGQKEGSPIAGKIGVAALPAGPGGKPAATLGGWQLAVNAYSKNPKEAADLVRYLTGAQEQKRRAVQASYNPTIATLYKDKDVLKAVPFFGSLYDVFTNAVARPATVTGSKYNQVSDAFSSAVYSVLTKKSAPGPALKTLEGQLARIKGRGW.

The signal sequence occupies residues 1 to 24 (MKKFAAVLGLTVAFAAASQAHAVT).

It belongs to the bacterial solute-binding protein 1 family.

In terms of biological role, probably part of a binding-protein-dependent transport system. In Deinococcus radiodurans (strain ATCC 13939 / DSM 20539 / JCM 16871 / CCUG 27074 / LMG 4051 / NBRC 15346 / NCIMB 9279 / VKM B-1422 / R1), this protein is Probable ABC transporter-binding protein DR_1438.